A 245-amino-acid chain; its full sequence is 1-(5-phosphoribosyl)-5-[(5-phosphoribosylamino)methylideneamino] imidazole-4-carboxamide isomerase (245 aa).

The Proton acceptor role is filled by aspartate 7. The active-site Proton donor is the aspartate 129.

It belongs to the HisA/HisF family.

The protein localises to the cytoplasm. The catalysed reaction is 1-(5-phospho-beta-D-ribosyl)-5-[(5-phospho-beta-D-ribosylamino)methylideneamino]imidazole-4-carboxamide = 5-[(5-phospho-1-deoxy-D-ribulos-1-ylimino)methylamino]-1-(5-phospho-beta-D-ribosyl)imidazole-4-carboxamide. It functions in the pathway amino-acid biosynthesis; L-histidine biosynthesis; L-histidine from 5-phospho-alpha-D-ribose 1-diphosphate: step 4/9. The sequence is that of 1-(5-phosphoribosyl)-5-[(5-phosphoribosylamino)methylideneamino] imidazole-4-carboxamide isomerase from Idiomarina loihiensis (strain ATCC BAA-735 / DSM 15497 / L2-TR).